We begin with the raw amino-acid sequence, 189 residues long: dCTP deaminase, dUMP-forming (189 aa).

DCTP contacts are provided by residues 101–106 (KSSLGR), aspartate 119, 127–129 (TLE), glutamine 148, tyrosine 162, and glutamine 174. Catalysis depends on glutamate 129, which acts as the Proton donor/acceptor.

It belongs to the dCTP deaminase family. Homotrimer.

It catalyses the reaction dCTP + 2 H2O = dUMP + NH4(+) + diphosphate. It participates in pyrimidine metabolism; dUMP biosynthesis; dUMP from dCTP: step 1/1. In terms of biological role, bifunctional enzyme that catalyzes both the deamination of dCTP to dUTP and the hydrolysis of dUTP to dUMP without releasing the toxic dUTP intermediate. The chain is dCTP deaminase, dUMP-forming from Rhodococcus opacus (strain B4).